The chain runs to 457 residues: C4-dicarboxylate transport protein (457 aa).

7 consecutive transmembrane segments (helical) span residues 20-42 (LYFQ…PAFA), 51-73 (AFIK…TGIA), 88-110 (AMAY…AHVV), 138-158 (LTLV…AFTG), 166-188 (LTGP…LALV), 212-234 (ILMR…KYGV), and 241-263 (AWLV…GLVS).

The protein belongs to the dicarboxylate/amino acid:cation symporter (DAACS) (TC 2.A.23) family.

The protein localises to the cell inner membrane. Functionally, responsible for the transport of dicarboxylates such as succinate, fumarate, and malate from the periplasm across the membrane. The sequence is that of C4-dicarboxylate transport protein from Xanthomonas axonopodis pv. citri (strain 306).